The following is a 68-amino-acid chain: Conotoxin Cal12.1p3 (68 aa).

Residues 1-21 (DLITNSYTRGKPRHVTSWPKL) constitute a propeptide that is removed on maturation.

Post-translationally, contains 4 disulfide bonds. In terms of tissue distribution, expressed by the venom duct.

The protein localises to the secreted. The protein is Conotoxin Cal12.1p3 of Californiconus californicus (California cone).